A 414-amino-acid chain; its full sequence is Snake venom metalloproteinase atrolysin-B (414 aa).

Residues methionine 1 to serine 20 form the signal peptide. A propeptide spanning residues isoleucine 21–aspartate 190 is cleaved from the precursor. Glutamine 191 is subject to Pyrrolidone carboxylic acid. The Peptidase M12B domain maps to arginine 197 to proline 393. Positions 200 and 284 each coordinate Ca(2+). 2 cysteine pairs are disulfide-bonded: cysteine 308/cysteine 388 and cysteine 348/cysteine 355. Histidine 333 is a Zn(2+) binding site. Residue glutamate 334 is part of the active site. Residues histidine 337 and histidine 343 each contribute to the Zn(2+) site. The Ca(2+) site is built by cysteine 388, asparagine 391, valine 403, asparagine 406, leucine 408, glutamate 410, and glutamate 413. Residues leucine 394–glutamate 414 constitute a propeptide that is removed on maturation.

The protein belongs to the venom metalloproteinase (M12B) family. P-I subfamily. Monomer. It depends on Zn(2+) as a cofactor. The N-terminus is blocked. As to expression, expressed by the venom gland.

It is found in the secreted. It catalyses the reaction Cleavage of 5-His-|-Leu-6, 10-His-|-Leu-11, 14-Ala-|-Leu-15, 16-Tyr-|-Leu-17 and 23-Gly-|-Phe-24 of insulin B chain. Identical to the cleavage of insulin B chain by atrolysin C. Also cleaves Xaa-|-Ser bonds in glucagon.. Its function is as follows. Snake venom metalloproteinase that impairs hemostasis in the envenomed animal. In Crotalus atrox (Western diamondback rattlesnake), this protein is Snake venom metalloproteinase atrolysin-B.